The sequence spans 359 residues: Membrane-bound lytic murein transglycosylase C (359 aa).

An N-terminal signal peptide occupies residues 1–16; sequence MKKYLALALIAPLLIS. The N-palmitoyl cysteine moiety is linked to residue Cys-17. Residue Cys-17 is the site of S-diacylglycerol cysteine attachment.

This sequence belongs to the transglycosylase Slt family.

The protein localises to the cell outer membrane. It catalyses the reaction Exolytic cleavage of the (1-&gt;4)-beta-glycosidic linkage between N-acetylmuramic acid (MurNAc) and N-acetylglucosamine (GlcNAc) residues in peptidoglycan, from either the reducing or the non-reducing ends of the peptidoglycan chains, with concomitant formation of a 1,6-anhydrobond in the MurNAc residue.. In terms of biological role, murein-degrading enzyme. May play a role in recycling of muropeptides during cell elongation and/or cell division. The protein is Membrane-bound lytic murein transglycosylase C of Escherichia coli (strain SMS-3-5 / SECEC).